Consider the following 378-residue polypeptide: Deoxyguanosinetriphosphate triphosphohydrolase-like protein (378 aa).

The HD domain occupies 62–198 (RLTHTIEVAQ…AAVADDVAYN (137 aa)).

It belongs to the dGTPase family. Type 2 subfamily.

The polypeptide is Deoxyguanosinetriphosphate triphosphohydrolase-like protein (Paracoccus denitrificans (strain Pd 1222)).